Reading from the N-terminus, the 598-residue chain is Elongation factor 4 (598 aa).

Residues 2-184 (DNVRNFAIIA…AIITKLPAPQ (183 aa)) form the tr-type G domain. Residues 14-19 (DHGKST) and 131-134 (NKVD) contribute to the GTP site.

It belongs to the TRAFAC class translation factor GTPase superfamily. Classic translation factor GTPase family. LepA subfamily.

It is found in the cell membrane. The enzyme catalyses GTP + H2O = GDP + phosphate + H(+). Required for accurate and efficient protein synthesis under certain stress conditions. May act as a fidelity factor of the translation reaction, by catalyzing a one-codon backward translocation of tRNAs on improperly translocated ribosomes. Back-translocation proceeds from a post-translocation (POST) complex to a pre-translocation (PRE) complex, thus giving elongation factor G a second chance to translocate the tRNAs correctly. Binds to ribosomes in a GTP-dependent manner. The protein is Elongation factor 4 of Wolbachia sp. subsp. Brugia malayi (strain TRS).